A 332-amino-acid chain; its full sequence is Delta-aminolevulinic acid dehydratase (332 aa).

Residue K199 is the Schiff-base intermediate with substrate of the active site. The 5-aminolevulinate site is built by R209 and K221. A Mg(2+)-binding site is contributed by E237. K252 (schiff-base intermediate with substrate) is an active-site residue. 2 residues coordinate 5-aminolevulinate: S278 and Y317.

This sequence belongs to the ALAD family. As to quaternary structure, homooctamer.

It carries out the reaction 2 5-aminolevulinate = porphobilinogen + 2 H2O + H(+). Its pathway is porphyrin-containing compound metabolism; protoporphyrin-IX biosynthesis; coproporphyrinogen-III from 5-aminolevulinate: step 1/4. Its function is as follows. Catalyzes an early step in the biosynthesis of tetrapyrroles. Binds two molecules of 5-aminolevulinate per subunit, each at a distinct site, and catalyzes their condensation to form porphobilinogen. The sequence is that of Delta-aminolevulinic acid dehydratase (hemB) from Chlamydia pneumoniae (Chlamydophila pneumoniae).